The chain runs to 407 residues: tRNA-specific 2-thiouridylase MnmA (407 aa).

ATP-binding positions include 20–27 and L46; that span reads AMSGGVDS. C114 acts as the Nucleophile in catalysis. C114 and C210 are disulfide-bonded. G138 is a binding site for ATP. The interval 160–162 is interaction with tRNA; sequence RDQ. C210 (cysteine persulfide intermediate) is an active-site residue.

Belongs to the MnmA/TRMU family.

The protein localises to the cytoplasm. The catalysed reaction is S-sulfanyl-L-cysteinyl-[protein] + uridine(34) in tRNA + AH2 + ATP = 2-thiouridine(34) in tRNA + L-cysteinyl-[protein] + A + AMP + diphosphate + H(+). In terms of biological role, catalyzes the 2-thiolation of uridine at the wobble position (U34) of tRNA, leading to the formation of s(2)U34. This is tRNA-specific 2-thiouridylase MnmA from Bartonella tribocorum (strain CIP 105476 / IBS 506).